A 544-amino-acid chain; its full sequence is Chaperonin GroEL 2 (544 aa).

ATP is bound by residues 29–32 (TLGP), 86–90 (DGTTT), glycine 413, 479–481 (NAA), and aspartate 495.

This sequence belongs to the chaperonin (HSP60) family. In terms of assembly, forms a cylinder of 14 subunits composed of two heptameric rings stacked back-to-back. Interacts with the co-chaperonin GroES.

Its subcellular location is the cytoplasm. It catalyses the reaction ATP + H2O + a folded polypeptide = ADP + phosphate + an unfolded polypeptide.. Together with its co-chaperonin GroES, plays an essential role in assisting protein folding. The GroEL-GroES system forms a nano-cage that allows encapsulation of the non-native substrate proteins and provides a physical environment optimized to promote and accelerate protein folding. The chain is Chaperonin GroEL 2 from Prochlorococcus marinus subsp. pastoris (strain CCMP1986 / NIES-2087 / MED4).